A 275-amino-acid chain; its full sequence is Ribosomal RNA small subunit methyltransferase A (275 aa).

Positions 21, 23, 48, 69, 94, and 115 each coordinate S-adenosyl-L-methionine.

It belongs to the class I-like SAM-binding methyltransferase superfamily. rRNA adenine N(6)-methyltransferase family. RsmA subfamily.

It localises to the cytoplasm. The catalysed reaction is adenosine(1518)/adenosine(1519) in 16S rRNA + 4 S-adenosyl-L-methionine = N(6)-dimethyladenosine(1518)/N(6)-dimethyladenosine(1519) in 16S rRNA + 4 S-adenosyl-L-homocysteine + 4 H(+). Functionally, specifically dimethylates two adjacent adenosines (A1518 and A1519) in the loop of a conserved hairpin near the 3'-end of 16S rRNA in the 30S particle. May play a critical role in biogenesis of 30S subunits. This chain is Ribosomal RNA small subunit methyltransferase A, found in Clostridium botulinum (strain Loch Maree / Type A3).